The chain runs to 611 residues: MENLVKSCAGIEKKRSNLTPSMEDILTESKERSSTSGASYESSSTTTVASSSPPPPPSQILGWPIRKASFRKNSKESVNFDHKKLTLHDDSGFKAKEMNSADVEMMKERFAKLLLGEDMSGSGKGVCTALAISNAITNLCATIFGQLWRLEPLSSEKKEMWRREMEWILSVSDHIVELTPSTQTYPDGNKFEVMTCRPRFDLFINLPALRKLDNMLLDILASFKKTEFWYVDQGIVASENDGSASFRRKIQRQEEKWWLPVPRLAPNGLTEEARTELNHKRECATQILKAAMAINSLALTEMDVPKSYLETLPKNGRSCLGDVIYRYVTSDKFSAESLLDCLDLSSEHIALDIANRVEASIYVWRRRVQTKLGVNNNTSSTTPKLTWEMVKELMAAGDKRGLLVERSETLLRCLKQRFPSLTQTSLDISKIQWNKDIGKSILESYSRALESLASNIIARIDDLLYVDDLTKQSDDNNLLSSPAVSSIIAHKKVVPLPYLISASGTPYRTSFSTTPGFSPSMISPKKGERRTPYSSKDTNKIIEKGLPSRGYGVRRVLNNYLGMESKLKICVNPSDNADTAVINQISKDVEEEKKRNSTSVHQKGPPKYTVS.

Positions 1–62 (MENLVKSCAG…PPPPPSQILG (62 aa)) are disordered. The span at 34-51 (STSGASYESSSTTTVASS) shows a compositional bias: low complexity. The region spanning 93–477 (FKAKEMNSAD…DLTKQSDDNN (385 aa)) is the PRONE domain. Disordered regions lie at residues 513–541 (TTPGFSPSMISPKKGERRTPYSSKDTNKI) and 588–611 (DVEEEKKRNSTSVHQKGPPKYTVS). Positions 525 to 541 (KKGERRTPYSSKDTNKI) are enriched in basic and acidic residues.

In terms of biological role, guanine-nucleotide exchange factor (GEF) that acts as an activator of Rop (Rho of plants) GTPases by promoting the exchange of GDP for GTP. The chain is Rop guanine nucleotide exchange factor 5 (ROPGEF5) from Arabidopsis thaliana (Mouse-ear cress).